The chain runs to 72 residues: Translation initiation factor IF-1 (72 aa).

Residues 1-72 (MSKDDVIEMQ…SRGRITWRAK (72 aa)) enclose the S1-like domain.

The protein belongs to the IF-1 family. As to quaternary structure, component of the 30S ribosomal translation pre-initiation complex which assembles on the 30S ribosome in the order IF-2 and IF-3, IF-1 and N-formylmethionyl-tRNA(fMet); mRNA recruitment can occur at any time during PIC assembly.

It localises to the cytoplasm. One of the essential components for the initiation of protein synthesis. Stabilizes the binding of IF-2 and IF-3 on the 30S subunit to which N-formylmethionyl-tRNA(fMet) subsequently binds. Helps modulate mRNA selection, yielding the 30S pre-initiation complex (PIC). Upon addition of the 50S ribosomal subunit IF-1, IF-2 and IF-3 are released leaving the mature 70S translation initiation complex. This is Translation initiation factor IF-1 from Clostridium novyi (strain NT).